A 445-amino-acid polypeptide reads, in one-letter code: Ribosomal protein uS12 methylthiotransferase RimO (445 aa).

An MTTase N-terminal domain is found at 10–120 (PKVGFVSLGC…VVNAVHEVVP (111 aa)). Residues Cys19, Cys55, Cys84, Cys153, Cys157, and Cys160 each contribute to the [4Fe-4S] cluster site. The Radical SAM core domain maps to 139-378 (LTPRHYAYLK…AHQQEISSAR (240 aa)). Positions 380–445 (QQRIGKEIEV…DEYDLWAETL (66 aa)) constitute a TRAM domain.

Belongs to the methylthiotransferase family. RimO subfamily. Requires [4Fe-4S] cluster as cofactor.

It is found in the cytoplasm. It carries out the reaction L-aspartate(89)-[ribosomal protein uS12]-hydrogen + (sulfur carrier)-SH + AH2 + 2 S-adenosyl-L-methionine = 3-methylsulfanyl-L-aspartate(89)-[ribosomal protein uS12]-hydrogen + (sulfur carrier)-H + 5'-deoxyadenosine + L-methionine + A + S-adenosyl-L-homocysteine + 2 H(+). Functionally, catalyzes the methylthiolation of an aspartic acid residue of ribosomal protein uS12. The sequence is that of Ribosomal protein uS12 methylthiotransferase RimO from Pseudomonas fluorescens (strain ATCC BAA-477 / NRRL B-23932 / Pf-5).